The primary structure comprises 270 residues: 4-hydroxy-tetrahydrodipicolinate reductase (270 aa).

NAD(+) is bound at residue 7 to 12 (GVSGRM). Arg-34 is a binding site for NADP(+). NAD(+)-binding positions include 97–99 (GTT) and 121–124 (SGNM). The active-site Proton donor/acceptor is His-155. His-156 contacts (S)-2,3,4,5-tetrahydrodipicolinate. Lys-159 serves as the catalytic Proton donor. 165 to 166 (GT) is a binding site for (S)-2,3,4,5-tetrahydrodipicolinate.

Belongs to the DapB family.

Its subcellular location is the cytoplasm. It carries out the reaction (S)-2,3,4,5-tetrahydrodipicolinate + NAD(+) + H2O = (2S,4S)-4-hydroxy-2,3,4,5-tetrahydrodipicolinate + NADH + H(+). It catalyses the reaction (S)-2,3,4,5-tetrahydrodipicolinate + NADP(+) + H2O = (2S,4S)-4-hydroxy-2,3,4,5-tetrahydrodipicolinate + NADPH + H(+). Its pathway is amino-acid biosynthesis; L-lysine biosynthesis via DAP pathway; (S)-tetrahydrodipicolinate from L-aspartate: step 4/4. Its function is as follows. Catalyzes the conversion of 4-hydroxy-tetrahydrodipicolinate (HTPA) to tetrahydrodipicolinate. The protein is 4-hydroxy-tetrahydrodipicolinate reductase of Allorhizobium ampelinum (strain ATCC BAA-846 / DSM 112012 / S4) (Agrobacterium vitis (strain S4)).